The primary structure comprises 311 residues: Ribonuclease HIII (311 aa).

The region spanning 95–311 (MSIVGSDEVG…NTEKAFRLLK (217 aa)) is the RNase H type-2 domain. A divalent metal cation contacts are provided by D101, E102, and D206.

Belongs to the RNase HII family. RnhC subfamily. The cofactor is Mn(2+). It depends on Mg(2+) as a cofactor.

It is found in the cytoplasm. The catalysed reaction is Endonucleolytic cleavage to 5'-phosphomonoester.. In terms of biological role, endonuclease that specifically degrades the RNA of RNA-DNA hybrids. The sequence is that of Ribonuclease HIII from Bacillus cereus (strain ATCC 10987 / NRS 248).